Reading from the N-terminus, the 110-residue chain is PCNA-associated factor (110 aa).

Lys15 participates in a covalent cross-link: Glycyl lysine isopeptide (Lys-Gly) (interchain with G-Cter in ubiquitin). Residues 23–34 (RKVLGSSTFVTN) carry the D-box motif. Lys24 is modified (N6-acetyllysine; alternate). Residue Lys24 forms a Glycyl lysine isopeptide (Lys-Gly) (interchain with G-Cter in ubiquitin); alternate linkage. 2 positions are modified to phosphoserine: Ser28 and Ser71. Positions 28-39 (SSTFVTNSSSSS) are enriched in low complexity. Residues 28-110 (SSTFVTNSSS…QPDHRDDENE (83 aa)) form a disordered region. A PIP-box motif is present at residues 61-71 (QKGIGEFFRLS). A compositionally biased stretch (basic and acidic residues) spans 71-80 (SPKESKKENQ). The KEN box signature appears at 77–79 (KEN). Residues 84–96 (EAGTSGLGKAKRK) carry the Initiation motif motif.

In terms of assembly, interacts (when monoubiquitinated at Lys-15 and Lys-24) with PCNA. Interacts with isoform 2/p33ING1b of ING1. Interacts with BRCA1. Post-translationally, monoubiquitinated at Lys-15 and Lys-24 during normal S phase, promoting its association with PCNA. Also diubiquitinated at these 2 sites. Following DNA damage, monoubiquitin chains at Lys-15 and Lys-24 are probably extended, leading to disrupt the interaction with PCNA. Polyubiquitinated by the APC/C complex at the mitotic exit, leading to its degradation by the proteasome.

The protein resides in the nucleus. It is found in the cytoplasm. The protein localises to the perinuclear region. In terms of biological role, PCNA-binding protein that acts as a regulator of DNA repair during DNA replication. Following DNA damage, the interaction with PCNA is disrupted, facilitating the interaction between monoubiquitinated PCNA and the translesion DNA synthesis DNA polymerase eta (POLH) at stalled replisomes, facilitating the bypass of replication-fork-blocking lesions. Also acts as a regulator of centrosome number. The chain is PCNA-associated factor from Mus musculus (Mouse).